Consider the following 93-residue polypeptide: Cell division topological specificity factor (93 aa).

It belongs to the MinE family.

Its function is as follows. Prevents the cell division inhibition by proteins MinC and MinD at internal division sites while permitting inhibition at polar sites. This ensures cell division at the proper site by restricting the formation of a division septum at the midpoint of the long axis of the cell. The chain is Cell division topological specificity factor from Alkaliphilus oremlandii (strain OhILAs) (Clostridium oremlandii (strain OhILAs)).